Here is a 229-residue protein sequence, read N- to C-terminus: 7-cyano-7-deazaguanine synthase (229 aa).

F8 to L18 is a binding site for ATP. Zn(2+)-binding residues include C186, C195, C198, and C201.

The protein belongs to the QueC family. Zn(2+) serves as cofactor.

It carries out the reaction 7-carboxy-7-deazaguanine + NH4(+) + ATP = 7-cyano-7-deazaguanine + ADP + phosphate + H2O + H(+). It functions in the pathway purine metabolism; 7-cyano-7-deazaguanine biosynthesis. In terms of biological role, catalyzes the ATP-dependent conversion of 7-carboxy-7-deazaguanine (CDG) to 7-cyano-7-deazaguanine (preQ(0)). This chain is 7-cyano-7-deazaguanine synthase, found in Edwardsiella ictaluri (strain 93-146).